Here is a 361-residue protein sequence, read N- to C-terminus: Beta-hexosaminidase (361 aa).

Residues aspartate 69, arginine 77, arginine 144, and 174-175 (KH) contribute to the substrate site. Residue histidine 187 is the Proton donor/acceptor of the active site. The Nucleophile role is filled by aspartate 258.

Belongs to the glycosyl hydrolase 3 family. NagZ subfamily.

Its subcellular location is the cytoplasm. The enzyme catalyses Hydrolysis of terminal non-reducing N-acetyl-D-hexosamine residues in N-acetyl-beta-D-hexosaminides.. It participates in cell wall biogenesis; peptidoglycan recycling. Functionally, plays a role in peptidoglycan recycling by cleaving the terminal beta-1,4-linked N-acetylglucosamine (GlcNAc) from peptide-linked peptidoglycan fragments, giving rise to free GlcNAc, anhydro-N-acetylmuramic acid and anhydro-N-acetylmuramic acid-linked peptides. The sequence is that of Beta-hexosaminidase from Neisseria meningitidis serogroup C (strain 053442).